Reading from the N-terminus, the 450-residue chain is Homogentisate 1,2-dioxygenase (450 aa).

Histidine 304 acts as the Proton acceptor in catalysis. Fe cation is bound by residues histidine 347 and glutamate 353. 2 residues coordinate homogentisate: tyrosine 362 and histidine 383. Histidine 383 lines the Fe cation pocket.

It belongs to the homogentisate dioxygenase family. Hexamer; dimer of trimers. Requires Fe cation as cofactor.

It carries out the reaction homogentisate + O2 = 4-maleylacetoacetate + H(+). It participates in amino-acid degradation; L-phenylalanine degradation; acetoacetate and fumarate from L-phenylalanine: step 4/6. Its function is as follows. Involved in the catabolism of homogentisate (2,5-dihydroxyphenylacetate or 2,5-OH-PhAc), a central intermediate in the degradation of phenylalanine and tyrosine. Catalyzes the oxidative ring cleavage of the aromatic ring of homogentisate to yield maleylacetoacetate. The chain is Homogentisate 1,2-dioxygenase from Burkholderia mallei (strain NCTC 10229).